The chain runs to 406 residues: MNAPQTPNSFRTGPDERGRFGIFGGRFVAETLMPNILELERAYAEAKADPAFQGEMNAYLTHYVGRPSPLYFAERLSAHFGGAKIYFKREELNHTGSHKVNNVLGQILLARRMGKPRIIAETGAGQHGVATATLCARFGLKCVVYMGAVDVERQKPNVFRMKMLGAEVVPVQSGTRTLKDAMNEALRDWVTNVADTFYCIGTVAGPHPYPAMVRDFQSVIGRETREQMLAQEGRLPDSLVACIGGGSNAMGLFHPFLDDREIEIYGVEAAGHGVSSGLHAASLTGGKPGVLHGNRTYLLMNEDGQIADAHSISAGLDYPGIGPEHAWLHEVGRVTYLSATDSETLEAFRLCSLMEGIIPALEPAHALAKVAELAPTKPRDHLMVVNLSGRGDKDIPQVAEILGDAL.

At K99 the chain carries N6-(pyridoxal phosphate)lysine.

This sequence belongs to the TrpB family. In terms of assembly, tetramer of two alpha and two beta chains. Pyridoxal 5'-phosphate serves as cofactor.

It carries out the reaction (1S,2R)-1-C-(indol-3-yl)glycerol 3-phosphate + L-serine = D-glyceraldehyde 3-phosphate + L-tryptophan + H2O. It participates in amino-acid biosynthesis; L-tryptophan biosynthesis; L-tryptophan from chorismate: step 5/5. Its function is as follows. The beta subunit is responsible for the synthesis of L-tryptophan from indole and L-serine. This Methylobacterium sp. (strain 4-46) protein is Tryptophan synthase beta chain.